A 152-amino-acid chain; its full sequence is Deoxyuridine 5'-triphosphate nucleotidohydrolase (152 aa).

Residues 71–73 (RSG), N84, 88–90 (LID), and M98 each bind substrate.

It belongs to the dUTPase family. The cofactor is Mg(2+).

The enzyme catalyses dUTP + H2O = dUMP + diphosphate + H(+). It functions in the pathway pyrimidine metabolism; dUMP biosynthesis; dUMP from dCTP (dUTP route): step 2/2. Functionally, this enzyme is involved in nucleotide metabolism: it produces dUMP, the immediate precursor of thymidine nucleotides and it decreases the intracellular concentration of dUTP so that uracil cannot be incorporated into DNA. This Enterobacter sp. (strain 638) protein is Deoxyuridine 5'-triphosphate nucleotidohydrolase.